The sequence spans 255 residues: Receptor expression-enhancing protein 3 (255 aa).

A run of 3 helical transmembrane segments spans residues 1–21 (MVSW…YPAY), 35–55 (YVRW…ETVA), and 59–79 (VAWF…LLSP). The interval 158 to 242 (TIQGDEPVGQ…KGRKEVRYGS (85 aa)) is disordered. The residue at position 201 (Thr201) is a Phosphothreonine. Residue Ser210 is modified to Phosphoserine. The span at 222–231 (RSQSMKSVKT) shows a compositional bias: polar residues.

This sequence belongs to the DP1 family. In terms of tissue distribution, expressed in circumvallate papillae.

It is found in the endoplasmic reticulum membrane. Its function is as follows. Microtubule-binding protein required to ensure proper cell division and nuclear envelope reassembly by sequestering the endoplasmic reticulum away from chromosomes during mitosis. Probably acts by clearing the endoplasmic reticulum membrane from metaphase chromosomes. This Homo sapiens (Human) protein is Receptor expression-enhancing protein 3 (REEP3).